We begin with the raw amino-acid sequence, 158 residues long: Cyclic pyranopterin monophosphate synthase (158 aa).

Substrate-binding positions include 75–77 (LCH) and 113–114 (ME). The active site involves Asp128.

Belongs to the MoaC family. In terms of assembly, homohexamer; trimer of dimers.

It catalyses the reaction (8S)-3',8-cyclo-7,8-dihydroguanosine 5'-triphosphate = cyclic pyranopterin phosphate + diphosphate. Its pathway is cofactor biosynthesis; molybdopterin biosynthesis. Functionally, catalyzes the conversion of (8S)-3',8-cyclo-7,8-dihydroguanosine 5'-triphosphate to cyclic pyranopterin monophosphate (cPMP). This chain is Cyclic pyranopterin monophosphate synthase, found in Acidiphilium cryptum (strain JF-5).